A 223-amino-acid polypeptide reads, in one-letter code: Thiamine-phosphate synthase (223 aa).

4-amino-2-methyl-5-(diphosphooxymethyl)pyrimidine-binding positions include Gln37–Lys41 and Asn69. Residues Asp70 and Asp89 each contribute to the Mg(2+) site. A 4-amino-2-methyl-5-(diphosphooxymethyl)pyrimidine-binding site is contributed by Ser108. Residue Thr134–Thr136 participates in 2-[(2R,5Z)-2-carboxy-4-methylthiazol-5(2H)-ylidene]ethyl phosphate binding. Position 137 (Lys137) interacts with 4-amino-2-methyl-5-(diphosphooxymethyl)pyrimidine. 2-[(2R,5Z)-2-carboxy-4-methylthiazol-5(2H)-ylidene]ethyl phosphate is bound by residues Gly167 and Val187–Ser188. The tract at residues Ala197–Ala223 is disordered. Residues Ser206–Pro217 show a composition bias toward polar residues.

Belongs to the thiamine-phosphate synthase family. Mg(2+) serves as cofactor.

It carries out the reaction 2-[(2R,5Z)-2-carboxy-4-methylthiazol-5(2H)-ylidene]ethyl phosphate + 4-amino-2-methyl-5-(diphosphooxymethyl)pyrimidine + 2 H(+) = thiamine phosphate + CO2 + diphosphate. It catalyses the reaction 2-(2-carboxy-4-methylthiazol-5-yl)ethyl phosphate + 4-amino-2-methyl-5-(diphosphooxymethyl)pyrimidine + 2 H(+) = thiamine phosphate + CO2 + diphosphate. The catalysed reaction is 4-methyl-5-(2-phosphooxyethyl)-thiazole + 4-amino-2-methyl-5-(diphosphooxymethyl)pyrimidine + H(+) = thiamine phosphate + diphosphate. The protein operates within cofactor biosynthesis; thiamine diphosphate biosynthesis; thiamine phosphate from 4-amino-2-methyl-5-diphosphomethylpyrimidine and 4-methyl-5-(2-phosphoethyl)-thiazole: step 1/1. Condenses 4-methyl-5-(beta-hydroxyethyl)thiazole monophosphate (THZ-P) and 2-methyl-4-amino-5-hydroxymethyl pyrimidine pyrophosphate (HMP-PP) to form thiamine monophosphate (TMP). This Haloquadratum walsbyi (strain DSM 16790 / HBSQ001) protein is Thiamine-phosphate synthase.